Consider the following 152-residue polypeptide: Ribosome maturation factor RimP (152 aa).

It belongs to the RimP family.

It is found in the cytoplasm. Its function is as follows. Required for maturation of 30S ribosomal subunits. In Shigella boydii serotype 4 (strain Sb227), this protein is Ribosome maturation factor RimP.